The chain runs to 467 residues: Nuclear distribution protein nudF 1 (467 aa).

Positions 9-41 constitute a LisH domain; it reads QAEELHKSIIAYLASVNLSESATTLRAELGDAV. Residues 60 to 87 are a coiled coil; that stretch reads TSVVRLQKKIMDLESRCAALQSELDSAT. WD repeat units lie at residues 113–154, 156–196, 200–247, 250–289, 292–352, 354–393, 398–428, and 429–466; these read SHRS…RTVK, HTKA…KNIR, GHDH…CVKT, GHVDWVRAVAPSIDGRFLFAAGDDRIPRLWDLSAAETRST, GHEH…IKTL, GHDNWVRALAFHPGGKYLLSVSDDKTIRCWDLTQECKCVR, THEHFVTCLRWAPPLIKDSGANGDAGANGTP, and AATTTSNGARQDPNAANKISIRCVIATGSVDQKVRVFA. A compositionally biased stretch (low complexity) spans 417–437; the sequence is GANGDAGANGTPAATTTSNGA. The segment at 417 to 441 is disordered; that stretch reads GANGDAGANGTPAATTTSNGARQDP.

The protein belongs to the WD repeat LIS1/nudF family. As to quaternary structure, self-associates. Interacts with nudE and dynein.

It localises to the cytoplasm. It is found in the cytoskeleton. Its subcellular location is the spindle pole. In terms of biological role, positively regulates the activity of the minus-end directed microtubule motor protein dynein. May enhance dynein-mediated microtubule sliding by targeting dynein to the microtubule plus end. Required for nuclear migration during vegetative growth as well as development. Required for retrograde early endosome (EE) transport from the hyphal tip. Required for localization of dynein to the mitotic spindle poles. Recruits additional proteins to the dynein complex at SPBs. The protein is Nuclear distribution protein nudF 1 of Aspergillus clavatus (strain ATCC 1007 / CBS 513.65 / DSM 816 / NCTC 3887 / NRRL 1 / QM 1276 / 107).